The sequence spans 1503 residues: Rho GTPase-activating protein 5 (1503 aa).

FF domains lie at 267–325, 366–420, 427–481, and 482–548; these read QLVV…HIEQ, KLME…HVQH, RIEM…HQRE, and IVEK…HIGF. Tyrosine 550 is modified (3'-nitrotyrosine). 2 positions are modified to phosphoserine: serine 590 and serine 765. The 174-residue stretch at 590 to 763 folds into the pG1 pseudoGTPase domain; it reads STNIDKVNLF…LESVKHNLDV (174 aa). In terms of domain architecture, pG2 pseudoGTPase spans 779–944; the sequence is RIVMCAMCGD…FSDVLEKKNM (166 aa). Phosphoserine is present on residues serine 951 and serine 968. Disordered regions lie at residues 975–1004, 1022–1050, and 1069–1091; these read YNNY…LPTP, HSTP…PKTN, and NPRK…SDNY. The segment covering 1036–1045 has biased composition (pro residues); that stretch reads VPPPIKPKPV. Position 1115 is a phosphoserine (serine 1115). Disordered stretches follow at residues 1129 to 1157 and 1169 to 1255; these read NTQG…YKYK and YRRT…TRRN. Residues 1141 to 1151 show a composition bias toward basic and acidic residues; it reads RTSKGHGERRP. 3 positions are modified to phosphoserine: serine 1196, serine 1203, and serine 1219. The Rho-GAP domain occupies 1263 to 1450; that stretch reads MPLQDLVTAE…TFIQQCQFFF (188 aa).

May interact with RASA1/p120GAP. As to expression, expressed in spinal cord, cerebellum, kidney, testis and lung.

The protein localises to the cytoplasm. Its subcellular location is the cell membrane. Functionally, GTPase-activating protein for Rho family members. This Mus musculus (Mouse) protein is Rho GTPase-activating protein 5 (Arhgap5).